Consider the following 505-residue polypeptide: AMP phosphorylase (505 aa).

AMP-binding positions include glycine 169, 195–200 (SRAITG), and threonine 204. The active-site Proton donor is the aspartate 257. AMP is bound by residues serine 265 and lysine 289.

Belongs to the thymidine/pyrimidine-nucleoside phosphorylase family. Type 2 subfamily.

It carries out the reaction AMP + phosphate = alpha-D-ribose 1,5-bisphosphate + adenine. The catalysed reaction is CMP + phosphate = cytosine + alpha-D-ribose 1,5-bisphosphate. The enzyme catalyses UMP + phosphate = alpha-D-ribose 1,5-bisphosphate + uracil. In terms of biological role, catalyzes the conversion of AMP and phosphate to adenine and ribose 1,5-bisphosphate (R15P). Exhibits phosphorylase activity toward CMP and UMP in addition to AMP. Functions in an archaeal AMP degradation pathway, together with R15P isomerase and RubisCO. This is AMP phosphorylase from Methanocorpusculum labreanum (strain ATCC 43576 / DSM 4855 / Z).